The primary structure comprises 334 residues: Putative violet-sensitive opsin (334 aa).

Residues 1-29 (MGKYFYLYENISKVGPYDGPQYYLAPTWA) are Extracellular-facing. Asn10 carries an N-linked (GlcNAc...) asparagine glycan. Residues 30 to 54 (FYLQAAFMGFVFFVGTPLNFVVLLA) traverse the membrane as a helical segment. At 55–66 (TAKYKKLRVPLN) the chain is on the cytoplasmic side. The chain crosses the membrane as a helical span at residues 67 to 88 (YILVNITFAGFIFVTFSVSQVF). Over 89 to 106 (LASVRGYYFFGQTLCALE) the chain is Extracellular. Cysteines 103 and 179 form a disulfide. Residues 107–126 (AAVGAVAGLVTSWSLAVLSF) form a helical membrane-spanning segment. At 127–145 (ERYLVICKPFGAFKFGSNH) the chain is on the cytoplasmic side. A helical transmembrane segment spans residues 146-168 (ALAAVIFTWFMGVVRCPPFFGWS). Topologically, residues 169–194 (RYIPEGLGCSCGPDWYTNCEEFSCAS) are extracellular. The chain crosses the membrane as a helical span at residues 195–222 (YSKFLLVTCFICPITIIIFSYSQLLGAL). Residues 223-244 (RAVAAQQAESASTQKAEKEVSR) are Cytoplasmic-facing. A helical membrane pass occupies residues 245-272 (MIIVMVASFVTCYGPYALTAQYYAYSQD). The Extracellular segment spans residues 273–279 (ENKDYRL). The helical transmembrane segment at 280 to 301 (VTIPAFFSKSSCVYNPLIYAFM) threads the bilayer. Residue Lys288 is modified to N6-(retinylidene)lysine. At 302-334 (NKQFNGCIMEMVFGKKMEEASEVSSKTEVSTDS) the chain is on the cytoplasmic side.

The protein belongs to the G-protein coupled receptor 1 family. Opsin subfamily. In terms of processing, phosphorylated on some or all of the serine and threonine residues present in the C-terminal region. As to expression, the three color pigments are found in the cone photoreceptor cells.

It is found in the membrane. In terms of biological role, visual pigments are the light-absorbing molecules that mediate vision. They consist of an apoprotein, opsin, covalently linked to cis-retinal. The polypeptide is Putative violet-sensitive opsin (Oryzias latipes (Japanese rice fish)).